The chain runs to 427 residues: MTAIVDIAAREILDSRGNPTIEVDVTLEDGSQGRAAVPSGASTGAHEAVELRDGDKSRFGGKGVLKAVENVDRDIFDALSGLDAEDQVHIDQVMLELDGTPNKGRLGANAILGVSLAVAKAAAEASSLPLYRYVGGVQARVLPVPMMNIINGGAHADNPIDFQEFMILPVGAPNLKEAVRWGAEVFHVLKGALKKAGHNTNVGDEGGFAPNLPSAEASLEFIVKAITDAGFKPGEDIYLGLDCASTEFFKDGKYVYEGEGKTRNLEEQAAYLGKLVESFPIVTIEDGMSEDDWEGWKILTDLIGKKCQLVGDDLFVTNVSRLSQGISKGIANSILVKVNQIGSLTETLAAVDMAQRAGYTAVMSHRSGETEDSTIADLAVATNCGQIKTGSLARSDRLAKYNQLIRIEEELGSQAVYAGRAALKALA.

Residue Gln-163 coordinates (2R)-2-phosphoglycerate. Catalysis depends on Glu-205, which acts as the Proton donor. Mg(2+) contacts are provided by Asp-242, Glu-285, and Asp-312. Residues Lys-337, Arg-366, Ser-367, and Lys-388 each coordinate (2R)-2-phosphoglycerate. The Proton acceptor role is filled by Lys-337.

Belongs to the enolase family. It depends on Mg(2+) as a cofactor.

Its subcellular location is the cytoplasm. The protein localises to the secreted. It localises to the cell surface. The enzyme catalyses (2R)-2-phosphoglycerate = phosphoenolpyruvate + H2O. It participates in carbohydrate degradation; glycolysis; pyruvate from D-glyceraldehyde 3-phosphate: step 4/5. Functionally, catalyzes the reversible conversion of 2-phosphoglycerate (2-PG) into phosphoenolpyruvate (PEP). It is essential for the degradation of carbohydrates via glycolysis. The protein is Enolase of Beijerinckia indica subsp. indica (strain ATCC 9039 / DSM 1715 / NCIMB 8712).